The following is a 479-amino-acid chain: HSPB1-associated protein 1 (479 aa).

The disordered stretch occupies residues 1-25 (MEAGCEGSSPQTLGERTMGEEGERV). Positions 88-208 (ETECSYVDAT…EDTPFLYPTR (121 aa)) are interaction with HSPB1. The region spanning 124–288 (WAYADYKYFV…HLARVEEAVT (165 aa)) is the JmjC domain. The disordered stretch occupies residues 347–412 (PRANGEEPGV…GDSQECTSRN (66 aa)). Over residues 356–369 (VQEHMEVEQARDPS) the composition is skewed to basic and acidic residues.

Interacts with CRYAB and HSPB1. Widely expressed. Highly expressed by Sertoli cells in testis (at protein level).

It localises to the cytoplasm. May play a role in cellular stress response. The sequence is that of HSPB1-associated protein 1 (Hspbap1) from Rattus norvegicus (Rat).